We begin with the raw amino-acid sequence, 416 residues long: Casein kinase I isoform epsilon (416 aa).

Positions 9 to 277 (YRLGRKIGSG…YLRQLFRNLF (269 aa)) constitute a Protein kinase domain. ATP-binding positions include 15 to 23 (IGSGSFGDI) and lysine 38. The active-site Proton acceptor is the aspartate 128. Basic and acidic residues predominate over residues 301–318 (PEDVDRERREHEREERMG). The tract at residues 301 to 416 (PEDVDRERRE…TSVPFDHLGK (116 aa)) is disordered. Phosphoserine occurs at positions 343 and 354. Residues 351 to 365 (TPASRIQQTGNTSPR) are compositionally biased toward polar residues. Threonine 362 bears the Phosphothreonine mark. Position 363 is a phosphoserine (serine 363). Residue arginine 382 is modified to Omega-N-methylarginine. Phosphoserine occurs at positions 389, 405, and 408.

This sequence belongs to the protein kinase superfamily. CK1 Ser/Thr protein kinase family. Casein kinase I subfamily. Monomer. Component of the circadian core oscillator, which includes the CRY proteins, CLOCK, or NPAS2, ARTNL/BMAL1 or ARTNL2/BMAL2, CSNK1D and/or CSNK1E, TIMELESS and the PER proteins. Interacts with ANKRD6. Interacts with PER1. Interacts with DBNDD2, LRP5, LRP6 and SOCS3. Interacts with SNAI1 (via zinc fingers). Interacts with DDX3X; this interaction greatly enhances CSNK1E affinity for ATP and DVL2 phosphorylation, but inhibits DDX3X ATPase/helicase activity. In the presence of RNA, the interaction is decreased. Interacts with FAM83A, FAM83B, FAM83E and FAM83H (via DUF1669). Autophosphorylated. Partially dephosphorylated by PPP5C. May be dephosphorylated by PP1. Expressed in all tissues examined, including brain, heart, lung, liver, pancreas, kidney, placenta and skeletal muscle. Expressed in monocytes and lymphocytes but not in granulocytes.

The protein resides in the cytoplasm. The protein localises to the nucleus. It carries out the reaction L-seryl-[protein] + ATP = O-phospho-L-seryl-[protein] + ADP + H(+). It catalyses the reaction L-threonyl-[protein] + ATP = O-phospho-L-threonyl-[protein] + ADP + H(+). Phosphorylation leads to a decrease in the catalytic activity. Its function is as follows. Casein kinases are operationally defined by their preferential utilization of acidic proteins such as caseins as substrates. Participates in Wnt signaling. Phosphorylates DVL1. Phosphorylates DVL2. Phosphorylates NEDD9/HEF1. Central component of the circadian clock. In balance with PP1, determines the circadian period length, through the regulation of the speed and rhythmicity of PER1 and PER2 phosphorylation. Controls PER1 and PER2 nuclear transport and degradation. Inhibits cytokine-induced granuloytic differentiation. In Mus musculus (Mouse), this protein is Casein kinase I isoform epsilon (Csnk1e).